Reading from the N-terminus, the 354-residue chain is Ferrochelatase (354 aa).

The Fe cation site is built by histidine 214 and glutamate 295.

It belongs to the ferrochelatase family.

Its subcellular location is the cytoplasm. The catalysed reaction is heme b + 2 H(+) = protoporphyrin IX + Fe(2+). The protein operates within porphyrin-containing compound metabolism; protoheme biosynthesis; protoheme from protoporphyrin-IX: step 1/1. In terms of biological role, catalyzes the ferrous insertion into protoporphyrin IX. The sequence is that of Ferrochelatase from Burkholderia ambifaria (strain MC40-6).